We begin with the raw amino-acid sequence, 306 residues long: Homoserine O-acetyltransferase (306 aa).

Residue Cys142 is the Acyl-thioester intermediate of the active site. Substrate-binding residues include Lys163 and Ser194. His237 serves as the catalytic Proton acceptor. Residue Glu239 is part of the active site. Arg251 is a binding site for substrate.

The protein belongs to the MetA family.

Its subcellular location is the cytoplasm. It catalyses the reaction L-homoserine + acetyl-CoA = O-acetyl-L-homoserine + CoA. It participates in amino-acid biosynthesis; L-methionine biosynthesis via de novo pathway; O-acetyl-L-homoserine from L-homoserine: step 1/1. In terms of biological role, transfers an acetyl group from acetyl-CoA to L-homoserine, forming acetyl-L-homoserine. The protein is Homoserine O-acetyltransferase of Clostridium tetani (strain Massachusetts / E88).